A 1407-amino-acid polypeptide reads, in one-letter code: MKDLLKFLKAQTKTEEFDAIKIALASPDMIRSWSFGEVKKPETINYRTFKPERDGLFCARIFGPVKDYECLCGKYKRLKHRGVICEKCGVEVTQTKVRRERMGHIELASPTAHIWFLKSLPSRIGLLLDMPLRDIERVLYFESYVVIEGGMTNLERQQILTEEQYLDALEEFGDEFDAKMGAEAIQALLKSMDLEQECEQLREELNETNSETKRKKLTKRIKLLEAFVQSGNKPEWMILTVLPVLPPDLRPLVPLDGGRFATSDLNDLYRRVINRNNRLKRLLDLAAPDIIVRNEKRMLQEAVDALLDNGRRGRAITGSNKRPLKSLADMIKGKQGRFRQNLLGKRVDYSGRSVITVGPYLRLHQCGLPKKMALELFKPFIYGKLELRGLATTIKAAKKMVEREEAVVWDILDEVIREHPVLLNRAPTLHRLGIQAFEPVLIEGKAIQLHPLVCAAYNADFDGDQMAVHVPLTLEAQLEARALMMSTNNILSPANGEPIIVPSQDVVLGLYYMTRDCVNAKGEGMVLTGPKEAERLYRSGLASLHARVKVRITEYEKDANGELVAKTSLKDTTVGRAILWMIVPKGLPYSIVNQALGKKAISKMLNTCYRILGLKPTVIFADQIMYTGFAYAARSGASVGIDDMVIPEKKHEIISEAEAEVAEIQEQFQSGLVTAGERYNKVIDIWAAANDRVSKAMMDNLQTETVINRDGQEEKQVSFNSIYMMADSGARGSAAQIRQLAGMRGLMAKPDGSIIETPITANFREGLNVLQYFISTHGARKGLADTALKTANSGYLTRRLVDVAQDLVVTEDDCGTHEGIMMTPVIEGGDVKEPLRDRVLGRVTAEDVLKPGTADILVPRNTLLHEQWCDLLEENSVDAVKVRSVVSCDTDFGVCAHCYGRDLARGHIINKGEAIGVIAAQSIGEPGTQLTMRTFHIGGAASRAAAESSIQVKNKGSIKLSNVKSVVNSSGKLVITSRNTELKLIDEFGRTKESYKVPYGAVLAKGDGEQVAGGETVANWDPHTMPVITEVSGFVRFTDMIDGQTITRQTDELTGLSSLVVLDSAERTAGGKDLRPALKIVDAQGNDVLIPGTDMPAQYFLPGKAIVQLEDGVQISSGDTLARIPQESGGTKDITGGLPRVADLFEARRPKEPAILAEISGIVSFGKETKGKRRLVITPVDGSDPYEEMIPKWRQLNVFEGERVERGDVISDGPEAPHDILRLRGVHAVTRYIVNEVQDVYRLQGVKINDKHIEVIVRQMLRKATIVNAGSSDFLEGEQVEYSRVKIANRELEANGKVGATYSRDLLGITKASLATESFISAASFQETTRVLTEAAVAGKRDELRGLKENVIVGRLIPAGTGYAYHQDRMRRRAAGEAPAAPQVTAEDASASLAELLNAGLGGSDNE.

Residues Cys70, Cys72, Cys85, and Cys88 each coordinate Zn(2+). The Mg(2+) site is built by Asp460, Asp462, and Asp464. Residues Cys814, Cys888, Cys895, and Cys898 each contribute to the Zn(2+) site. N6-acetyllysine is present on Lys972.

This sequence belongs to the RNA polymerase beta' chain family. The RNAP catalytic core consists of 2 alpha, 1 beta, 1 beta' and 1 omega subunit. When a sigma factor is associated with the core the holoenzyme is formed, which can initiate transcription. The cofactor is Mg(2+). It depends on Zn(2+) as a cofactor.

It carries out the reaction RNA(n) + a ribonucleoside 5'-triphosphate = RNA(n+1) + diphosphate. Its function is as follows. DNA-dependent RNA polymerase catalyzes the transcription of DNA into RNA using the four ribonucleoside triphosphates as substrates. The sequence is that of DNA-directed RNA polymerase subunit beta' from Shigella sonnei (strain Ss046).